The following is a 330-amino-acid chain: WRKY transcription factor WRKY51 (330 aa).

The interval 39–61 (QTGTSERSPAPAPAQEQQQQQQV) is disordered. Residues 51-60 (PAQEQQQQQQ) show a composition bias toward low complexity. Residues 74-81 (FKKVISML) carry the Nuclear localization signal motif. 2 disordered regions span residues 91 to 117 (RGPVVAQSSGPAASEPAPVRSSPSAVS) and 302 to 330 (YEGEHRHTPSAAGQDHPPAPPPPLALPLA). Positions 101 to 117 (PAASEPAPVRSSPSAVS) are enriched in low complexity. Residues 245–311 (KVADIPADDF…YEGEHRHTPS (67 aa)) constitute a DNA-binding region (WRKY). The span at 318–330 (PPAPPPPLALPLA) shows a compositional bias: pro residues.

Belongs to the WRKY group II-a family. In terms of tissue distribution, highly expressed in aleurone cells. In seeds, predominantly present in the plumule, radicle and scutellum of the embryo.

Its subcellular location is the nucleus. Transcription factor. Interacts, when in complex with WRKY71, specifically with the W box (5'-(T)TGAC[CT]-3'), a frequently occurring elicitor-responsive cis-acting element. Represses specifically gibberellic acid (GA)-induced promoters in aleurone cells, probably by interfering with GAM1. This is WRKY transcription factor WRKY51 from Oryza sativa subsp. indica (Rice).